An 804-amino-acid polypeptide reads, in one-letter code: Leucine--tRNA ligase (804 aa).

A 'HIGH' region motif is present at residues 39 to 50 (PFPSGKGLHVGH). The short motif at 573-577 (KMSKS) is the 'KMSKS' region element. Residue K576 participates in ATP binding.

Belongs to the class-I aminoacyl-tRNA synthetase family.

Its subcellular location is the cytoplasm. It catalyses the reaction tRNA(Leu) + L-leucine + ATP = L-leucyl-tRNA(Leu) + AMP + diphosphate. The sequence is that of Leucine--tRNA ligase from Lactobacillus johnsonii (strain CNCM I-12250 / La1 / NCC 533).